The primary structure comprises 283 residues: Non-selective voltage-gated ion channel VDAC3 (283 aa).

C2 is subject to N-acetylcysteine. The residue at position 4 (T4) is a Phosphothreonine. N6-acetyllysine is present on residues K12, K15, and K20. The next 2 membrane-spanning stretches (beta stranded) occupy residues 26–35 and 39–47; these read MVKIDLRTKS and VEFSTSGHA. A Glycyl lysine isopeptide (Lys-Gly) (interchain with G-Cter in ubiquitin) cross-link involves residue K53. 3 beta stranded membrane-spanning segments follow: residues 54 to 64, 69 to 76, and 80 to 89; these read ASGNLETKYKI, LTFTQKWN, and TLGTEISLEN. An N6-acetyllysine modification is found at K90. A beta stranded membrane pass occupies residues 95 to 104; it reads LKLTLDTIFV. Residues K109 and K110 each participate in a glycyl lysine isopeptide (Lys-Gly) (interchain with G-Cter in ubiquitin) cross-link. A run of 10 beta stranded transmembrane segments spans residues 111–120, 123–130, 137–145, 150–158, 163–175, 178–185, 189–198, 202–211, 218–227, and 231–238; these read SGKLKASYKR, FSIGSNVD, TIYGWAVLA, LAGYQMSFD, KLSQNNFALGYKA, FQLHTHVN, EFGGSIYQKV, IETSINLAWT, RFGIAAKYKL, and TSLSAKVN. S241 is modified (phosphoserine). NAD(+) contacts are provided by residues 242–244 and 260–264; these read LIG and SALID. 2 beta stranded membrane passes run 242–251 and 254–263; these read LIGLGYTQTL and GVKLTLSALI. The residue at position 266 (K266) is an N6-acetyllysine; alternate. Residue K266 forms a Glycyl lysine isopeptide (Lys-Gly) (interchain with G-Cter in ubiquitin); alternate linkage. A beta stranded transmembrane segment spans residues 273-282; that stretch reads HKVGLGFELE.

It belongs to the eukaryotic mitochondrial porin family. In terms of assembly, interacts with ARMC12 in a TBC1D21-dependent manner. Interacts with MISFA. Post-translationally, ubiquitinated by PRKN during mitophagy, leading to its degradation and enhancement of mitophagy. Deubiquitinated by USP30.

It localises to the mitochondrion outer membrane. It is found in the membrane. The enzyme catalyses chloride(in) = chloride(out). The catalysed reaction is K(+)(in) = K(+)(out). In terms of biological role, non-selective voltage-gated ion channel that mediates the transport of anions and cations through the mitochondrion outer membrane and plasma membrane. Forms a high-conducting channel with a stable open state and a voltage-induced closure with a mild preference for anions over cations. Involved in male fertility and sperm mitochondrial sheath formation. The chain is Non-selective voltage-gated ion channel VDAC3 from Sus scrofa (Pig).